A 1305-amino-acid polypeptide reads, in one-letter code: Cyclin-G-associated kinase (1305 aa).

At serine 2 the chain carries N-acetylserine. Phosphoserine occurs at positions 2 and 16. One can recognise a Protein kinase domain in the interval 40–317; it reads LRVRRVLAEG…EVVRQLQEIA (278 aa). Residues 46–54 and lysine 69 each bind ATP; that span reads LAEGGFAFV. The active-site Proton acceptor is aspartate 173. Residues 397–564 form the Phosphatase tensin-type domain; that stretch reads SVANYAKGDL…EYVCDMVAEE (168 aa). Phosphoserine is present on serine 454. In terms of domain architecture, C2 tensin-type spans 570 to 708; the sequence is SKPMLVKSVV…FQVNLEVEVE (139 aa). Disordered regions lie at residues 707-732 and 747-854; these read VEPRDRPSREAPPWENTSLRGLNPKI and FGKP…AAGT. Serine 768 bears the Phosphoserine mark. Threonine 774 carries the phosphothreonine modification. Polar residues predominate over residues 776 to 789; the sequence is SDSPQSSSTDTNHF. Serine 781 is modified (phosphoserine). The residue at position 792 (threonine 792) is a Phosphothreonine. Residues 805–816 are compositionally biased toward polar residues; sequence LDNTSPKESQSV. 3 positions are modified to phosphoserine: serine 809, serine 824, and serine 827. Residues 822 to 832 are compositionally biased toward acidic residues; the sequence is DGSEVSDEEEA. Residues 836–848 are compositionally biased toward basic and acidic residues; that stretch reads SEERKPGAGEDTP. The residue at position 938 (serine 938) is a Phosphoserine. Positions 1037-1139 are disordered; that stretch reads DTWADTATPG…WTPQAKPAPR (103 aa). Residues 1084-1099 show a composition bias toward low complexity; it reads DLSDLSSSLQGLPAGL. A compositionally biased stretch (polar residues) spans 1111-1132; sequence TQKSNSPWQANRPTAPGTSWTP. Residue arginine 1122 is modified to Omega-N-methylarginine. Residue serine 1171 is modified to Phosphoserine. The J domain maps to 1241 to 1305; the sequence is SRWTPVSMAD…FENQGSRPLF (65 aa).

The protein belongs to the protein kinase superfamily. Ser/Thr protein kinase family.

It is found in the cytoplasm. Its subcellular location is the perinuclear region. The protein localises to the golgi apparatus. It localises to the trans-Golgi network. The protein resides in the cell junction. It is found in the focal adhesion. Its subcellular location is the cytoplasmic vesicle. The protein localises to the clathrin-coated vesicle. It carries out the reaction L-seryl-[protein] + ATP = O-phospho-L-seryl-[protein] + ADP + H(+). It catalyses the reaction L-threonyl-[protein] + ATP = O-phospho-L-threonyl-[protein] + ADP + H(+). Its function is as follows. Associates with cyclin G and CDK5. Seems to act as an auxilin homolog that is involved in the uncoating of clathrin-coated vesicles by Hsc70 in non-neuronal cells. Expression oscillates slightly during the cell cycle, peaking at G1. May play a role in clathrin-mediated endocytosis and intracellular trafficking, and in the dynamics of clathrin assembly/disassembly. In Mus musculus (Mouse), this protein is Cyclin-G-associated kinase.